We begin with the raw amino-acid sequence, 450 residues long: uncharacterized protein (450 aa).

Over residues 387-416 (ELDEKNNNKEENKNQDLHEPKESSSEDLLK) the composition is skewed to basic and acidic residues. Positions 387–439 (ELDEKNNNKEENKNQDLHEPKESSSEDLLKRLNNLKINTNEGPVQDNENHDNE) are disordered.

This is an uncharacterized protein from Saccharomyces cerevisiae (strain ATCC 204508 / S288c) (Baker's yeast).